Here is an 890-residue protein sequence, read N- to C-terminus: Calcium-transporting ATPase (890 aa).

Residues 1 to 47 (MKFHEMGQTDLLEATNTSMKQGLTEKEVKKRLDKHGPNELQEGKKTS) are Cytoplasmic-facing. Residues 48–68 (ALLLFFAQFKDFMVLVLLAAT) traverse the membrane as a helical segment. At 69-78 (LISGFLGEYV) the chain is on the extracellular side. A helical transmembrane segment spans residues 79-99 (DAVAIIAIVFVNGILGFFQER). Residues 100 to 238 (RAEQSLQALK…TLSTPLQRRL (139 aa)) lie on the Cytoplasmic side of the membrane. The chain crosses the membrane as a helical span at residues 239–258 (EQLGKILIVVALLLTVLVVA). At 259-270 (VGVIQGHDLYSM) the chain is on the extracellular side. The chain crosses the membrane as a helical span at residues 271–288 (FLAGVSLAVAAIPEGLPA). Positions 279, 280, 282, and 284 each coordinate Ca(2+). Residues 289–688 (IVTVALSLGV…KEGRNIYENI (400 aa)) lie on the Cytoplasmic side of the membrane. The active-site 4-aspartylphosphate intermediate is the Asp326. Mg(2+) is bound by residues Asp633 and Asp637. The chain crosses the membrane as a helical span at residues 689–708 (RKFIRYLLASNVGEILVMLF). The Ca(2+) site is built by Asn699 and Glu702. Over 709 to 718 (AMLLALPLPL) the chain is Extracellular. The chain crosses the membrane as a helical span at residues 719–739 (VPIQILWVNLVTDGLPAMALG). Residues Asn727, Thr730, and Asp731 each contribute to the Ca(2+) site. The Cytoplasmic segment spans residues 740-759 (MDQPEGDVMKRKPRHPKEGV). The helical transmembrane segment at 760–782 (FARKLGWKVVSRGFLIGVATILA) threads the bilayer. The Extracellular portion of the chain corresponds to 783-798 (FIIVYHRNPENLAYAQ). A helical transmembrane segment spans residues 799 to 818 (TIAFATLVLAQLIHVFDCRS). The Cytoplasmic segment spans residues 819–830 (ETSVFSRNPFQN). A helical membrane pass occupies residues 831–849 (LYLIGAVLSSILLMLVVIY). At 850–864 (YPPLQPIFHTVAITP) the chain is on the extracellular side. A helical membrane pass occupies residues 865–885 (GDWMLVIGMSAIPTFLLAGSL). Residues 886–890 (LTRKK) are Cytoplasmic-facing.

It belongs to the cation transport ATPase (P-type) (TC 3.A.3) family. Type IIA subfamily. Post-translationally, phosphorylated in a Ca(2+)-dependent manner starting 4 hours after shifting to sporulation medium.

The protein localises to the cell membrane. It catalyses the reaction Ca(2+)(in) + ATP + H2O = Ca(2+)(out) + ADP + phosphate + H(+). In terms of biological role, this magnesium-dependent enzyme catalyzes the hydrolysis of ATP coupled with the transport of calcium. This Bacillus subtilis (strain 168) protein is Calcium-transporting ATPase (yloB).